Consider the following 93-residue polypeptide: Large ribosomal subunit protein uL23cz/uL23cy (93 aa).

It belongs to the universal ribosomal protein uL23 family. Part of the 50S ribosomal subunit.

Its subcellular location is the plastid. The protein localises to the chloroplast. Functionally, binds to 23S rRNA. The chain is Large ribosomal subunit protein uL23cz/uL23cy (rpl23-A) from Phaseolus angularis (Azuki bean).